A 245-amino-acid chain; its full sequence is Leucyl/phenylalanyl-tRNA--protein transferase (245 aa).

It belongs to the L/F-transferase family.

It is found in the cytoplasm. The enzyme catalyses N-terminal L-lysyl-[protein] + L-leucyl-tRNA(Leu) = N-terminal L-leucyl-L-lysyl-[protein] + tRNA(Leu) + H(+). It carries out the reaction N-terminal L-arginyl-[protein] + L-leucyl-tRNA(Leu) = N-terminal L-leucyl-L-arginyl-[protein] + tRNA(Leu) + H(+). The catalysed reaction is L-phenylalanyl-tRNA(Phe) + an N-terminal L-alpha-aminoacyl-[protein] = an N-terminal L-phenylalanyl-L-alpha-aminoacyl-[protein] + tRNA(Phe). Its function is as follows. Functions in the N-end rule pathway of protein degradation where it conjugates Leu, Phe and, less efficiently, Met from aminoacyl-tRNAs to the N-termini of proteins containing an N-terminal arginine or lysine. This chain is Leucyl/phenylalanyl-tRNA--protein transferase, found in Paraburkholderia xenovorans (strain LB400).